A 182-amino-acid chain; its full sequence is MKIDKKYFRKVVNEIIAKTDKSEENLLKISSILDILNKLFKENQTFRNIVLNPKASMEDKEKLMEKVLSALGVDAEISKLLIKIVKDKKANIFKELNKVFKFEVEKFFGTVQGEIISAYKIDEALLNEIKSVIESKIGKKVEFTVKEDNSLIGGAVIKAGTYIIDTSVKSYLKRLESTLSRF.

Belongs to the ATPase delta chain family. In terms of assembly, F-type ATPases have 2 components, F(1) - the catalytic core - and F(0) - the membrane proton channel. F(1) has five subunits: alpha(3), beta(3), gamma(1), delta(1), epsilon(1). F(0) has three main subunits: a(1), b(2) and c(10-14). The alpha and beta chains form an alternating ring which encloses part of the gamma chain. F(1) is attached to F(0) by a central stalk formed by the gamma and epsilon chains, while a peripheral stalk is formed by the delta and b chains.

It is found in the cell inner membrane. Its function is as follows. F(1)F(0) ATP synthase produces ATP from ADP in the presence of a proton or sodium gradient. F-type ATPases consist of two structural domains, F(1) containing the extramembraneous catalytic core and F(0) containing the membrane proton channel, linked together by a central stalk and a peripheral stalk. During catalysis, ATP synthesis in the catalytic domain of F(1) is coupled via a rotary mechanism of the central stalk subunits to proton translocation. In terms of biological role, this protein is part of the stalk that links CF(0) to CF(1). It either transmits conformational changes from CF(0) to CF(1) or is implicated in proton conduction. The protein is ATP synthase subunit delta of Sulfurihydrogenibium sp. (strain YO3AOP1).